We begin with the raw amino-acid sequence, 360 residues long: Peptide chain release factor 1 (360 aa).

Position 235 is an N5-methylglutamine (Gln235). A disordered region spans residues Arg284–Arg303.

The protein belongs to the prokaryotic/mitochondrial release factor family. Post-translationally, methylated by PrmC. Methylation increases the termination efficiency of RF1.

Its subcellular location is the cytoplasm. Functionally, peptide chain release factor 1 directs the termination of translation in response to the peptide chain termination codons UAG and UAA. In Bordetella avium (strain 197N), this protein is Peptide chain release factor 1.